The chain runs to 89 residues: Translation initiation factor IF-1 1 (89 aa).

The S1-like domain maps to 1–73; sequence MSNKEQLIEM…TKGRITFRHL (73 aa).

The protein belongs to the IF-1 family. Component of the 30S ribosomal translation pre-initiation complex which assembles on the 30S ribosome in the order IF-2 and IF-3, IF-1 and N-formylmethionyl-tRNA(fMet); mRNA recruitment can occur at any time during PIC assembly.

It is found in the cytoplasm. One of the essential components for the initiation of protein synthesis. Stabilizes the binding of IF-2 and IF-3 on the 30S subunit to which N-formylmethionyl-tRNA(fMet) subsequently binds. Helps modulate mRNA selection, yielding the 30S pre-initiation complex (PIC). Upon addition of the 50S ribosomal subunit IF-1, IF-2 and IF-3 are released leaving the mature 70S translation initiation complex. In Acidovorax sp. (strain JS42), this protein is Translation initiation factor IF-1 1.